Consider the following 430-residue polypeptide: 3-phosphoshikimate 1-carboxyvinyltransferase (430 aa).

3 residues coordinate 3-phosphoshikimate: Lys-33, Ser-34, and Arg-38. Lys-33 is a binding site for phosphoenolpyruvate. Residues Gly-101 and Arg-129 each coordinate phosphoenolpyruvate. 3-phosphoshikimate-binding residues include Ser-172, Ser-173, Gln-174, Ser-201, Glu-319, and His-346. Residue Gln-174 coordinates phosphoenolpyruvate. Glu-319 serves as the catalytic Proton acceptor. Arg-350, Arg-391, and Lys-416 together coordinate phosphoenolpyruvate.

Belongs to the EPSP synthase family. Monomer.

Its subcellular location is the cytoplasm. The enzyme catalyses 3-phosphoshikimate + phosphoenolpyruvate = 5-O-(1-carboxyvinyl)-3-phosphoshikimate + phosphate. It functions in the pathway metabolic intermediate biosynthesis; chorismate biosynthesis; chorismate from D-erythrose 4-phosphate and phosphoenolpyruvate: step 6/7. Its function is as follows. Catalyzes the transfer of the enolpyruvyl moiety of phosphoenolpyruvate (PEP) to the 5-hydroxyl of shikimate-3-phosphate (S3P) to produce enolpyruvyl shikimate-3-phosphate and inorganic phosphate. The polypeptide is 3-phosphoshikimate 1-carboxyvinyltransferase (Corynebacterium glutamicum (strain R)).